The following is a 432-amino-acid chain: D-amino acid dehydrogenase (432 aa).

3–17 (VVILGSGVVGVASAW) is an FAD binding site.

It belongs to the DadA oxidoreductase family. FAD serves as cofactor.

The catalysed reaction is a D-alpha-amino acid + A + H2O = a 2-oxocarboxylate + AH2 + NH4(+). The protein operates within amino-acid degradation; D-alanine degradation; NH(3) and pyruvate from D-alanine: step 1/1. In terms of biological role, oxidative deamination of D-amino acids. In Klebsiella pneumoniae (strain 342), this protein is D-amino acid dehydrogenase.